Here is a 1055-residue protein sequence, read N- to C-terminus: Focal adhesion kinase 1 (1055 aa).

The interval 1 to 29 (MAAAYLDPNLNHTPSSSTKTHLGTGTERS) is disordered. Ala-2 bears the N-acetylalanine mark. A Phosphotyrosine modification is found at Tyr-5. A compositionally biased stretch (polar residues) spans 10-27 (LNHTPSSSTKTHLGTGTE). At Thr-13 the chain carries Phosphothreonine. Ser-29 and Ser-54 each carry phosphoserine. Residues 35 to 355 (RVLKVFHYFE…GYCRLVNGAT (321 aa)) enclose the FERM domain. Lys-152 participates in a covalent cross-link: Glycyl lysine isopeptide (Lys-Gly) (interchain with G-Cter in SUMO). At Tyr-397 the chain carries Phosphotyrosine; by autocatalysis. A Phosphotyrosine modification is found at Tyr-407. The region spanning 422 to 680 (IELGRCIGEG…ELKAQLSTIL (259 aa)) is the Protein kinase domain. Residues 428-434 (IGEGQFG), Lys-454, and 500-502 (ELC) each bind ATP. The active-site Proton acceptor is the Asp-546. Tyr-570 and Tyr-576 each carry phosphotyrosine. Tyr-577 carries the phosphotyrosine; by RET and SRC modification. Ser-580 is subject to Phosphoserine. Positions 685-697 (VQQEERMRMESRR) are enriched in basic and acidic residues. Disordered regions lie at residues 685–734 (VQQE…PSPQ) and 837–923 (VRLS…LDRS). Residues 707–1055 (GSDEAPPKPS…LKMLGQTRPH (349 aa)) form an interaction with TGFB1I1 region. Position 722 is a phosphoserine (Ser-722). Ser-732 bears the Phosphoserine; by CDK5 mark. Positions 837 to 849 (VRLSRGSIDREDG) are enriched in basic and acidic residues. At Ser-843 the chain carries Phosphoserine. Tyr-861 carries the post-translational modification Phosphotyrosine. A compositionally biased stretch (pro residues) spans 869–880 (PAAPPKKPPRPG). Positions 886–896 (SNLSSISSPAE) are enriched in polar residues. A Phosphoserine modification is found at Ser-913. Residues 915–1055 (PPTANLDRSN…LKMLGQTRPH (141 aa)) are interaction with ARHGEF28. The residue at position 917 (Thr-917) is a Phosphothreonine. Tyr-928 is subject to Phosphotyrosine.

Belongs to the protein kinase superfamily. Tyr protein kinase family. FAK subfamily. As to quaternary structure, interacts with GIT1. Component of a complex that contains at least FER, CTTN and PTK2/FAK1. Interacts with BMX. Interacts with STEAP4. Interacts with ZFYVE21. Interacts with ESR1. Interacts with PIK3R1 or PIK3R2. Interacts with FGR, FLT4 and RET. Interacts with EPHA2 in resting cells; activation of EPHA2 recruits PTPN11, leading to dephosphorylation of PTK2/FAK1 and dissociation of the complex. Interacts with EPHA1 (kinase activity-dependent). Interacts with P53/TP53. Interacts (via first Pro-rich region) with CAS family members (via SH3 domain), including BCAR1, BCAR3, and CASS4. Interacts with NEDD9 (via SH3 domain). Interacts with TGFB1I1. Interacts with SRC, GRB2 and GRB7. Interacts with ARHGEF28. Interacts with SHB. Part of a complex composed of THSD1, PTK2/FAK1, TLN1 and VCL. Interacts with PXN and TLN1. Interacts with SORBS1. Interacts with STAT1. Interacts with WASL. Interacts with ARHGAP26 and SHC1. Interacts with RB1CC1; this inhibits PTK2/FAK1 activity and activation of downstream signaling pathways. Interacts with ARHGEF7. Interacts with MDM2. Interacts with PIAS1. Interacts with DCC. Interacts with LPXN (via LD motif 3). Interacts with MISP. Interacts with EMP2; regulates PTK2 activation and localization. Interacts with DSCAM. Interacts with AMBRA1. Interacts (when tyrosine-phosphorylated) with tensin TNS1; the interaction is increased by phosphorylation of TNS1. In terms of processing, phosphorylated on tyrosine residues upon activation, e.g. upon integrin signaling. Tyr-397 is the major autophosphorylation site, but other kinases can also phosphorylate this residue. Phosphorylation at Tyr-397 promotes interaction with SRC and SRC family members, leading to phosphorylation at Tyr-576, Tyr-577 and at additional tyrosine residues. FGR promotes phosphorylation at Tyr-397 and Tyr-576. FER promotes phosphorylation at Tyr-577, Tyr-861 and Tyr-928, even when cells are not adherent. Tyr-397, Tyr-576 and Ser-722 are phosphorylated only when cells are adherent. Phosphorylation at Tyr-397 is important for interaction with BMX, PIK3R1 and SHC1. Phosphorylation at Tyr-928 is important for interaction with GRB2. Dephosphorylated by PTPN11; PTPN11 is recruited to PTK2 via EPHA2 (tyrosine phosphorylated). Microtubule-induced dephosphorylation at Tyr-397 is crucial for the induction of focal adhesion disassembly; this dephosphorylation could be catalyzed by PTPN11 and regulated by ZFYVE21. Phosphorylation on tyrosine residues is enhanced by NTN1. Post-translationally, sumoylated; this enhances autophosphorylation.

It is found in the cell junction. Its subcellular location is the focal adhesion. The protein resides in the cell membrane. The protein localises to the cytoplasm. It localises to the perinuclear region. It is found in the cell cortex. Its subcellular location is the cytoskeleton. The protein resides in the microtubule organizing center. The protein localises to the centrosome. It localises to the nucleus. It is found in the cilium basal body. The catalysed reaction is L-tyrosyl-[protein] + ATP = O-phospho-L-tyrosyl-[protein] + ADP + H(+). With respect to regulation, subject to autoinhibition, mediated by interactions between the FERM domain and the kinase domain. Activated by autophosphorylation at Tyr-397. This promotes interaction with SRC and phosphorylation at Tyr-576 and Tyr-577 in the kinase activation loop by SRC. Phosphorylation at Tyr-397, Tyr-576 and Tyr-577 is required for maximal kinase activity. Its function is as follows. Non-receptor protein-tyrosine kinase that plays an essential role in regulating cell migration, adhesion, spreading, reorganization of the actin cytoskeleton, formation and disassembly of focal adhesions and cell protrusions, cell cycle progression, cell proliferation and apoptosis. Required for early embryonic development and placenta development. Required for embryonic angiogenesis, normal cardiomyocyte migration and proliferation, and normal heart development. Regulates axon growth and neuronal cell migration, axon branching and synapse formation; required for normal development of the nervous system. Plays a role in osteogenesis and differentiation of osteoblasts. Functions in integrin signal transduction, but also in signaling downstream of numerous growth factor receptors, G-protein coupled receptors (GPCR), EPHA2, netrin receptors and LDL receptors. Forms multisubunit signaling complexes with SRC and SRC family members upon activation; this leads to the phosphorylation of additional tyrosine residues, creating binding sites for scaffold proteins, effectors and substrates. Regulates numerous signaling pathways. Promotes activation of phosphatidylinositol 3-kinase and the AKT1 signaling cascade. Promotes activation of MAPK1/ERK2, MAPK3/ERK1 and the MAP kinase signaling cascade. Promotes localized and transient activation of guanine nucleotide exchange factors (GEFs) and GTPase-activating proteins (GAPs), and thereby modulates the activity of Rho family GTPases. Signaling via CAS family members mediates activation of RAC1. Phosphorylates NEDD9 following integrin stimulation. Recruits the ubiquitin ligase MDM2 to P53/TP53 in the nucleus, and thereby regulates P53/TP53 activity, P53/TP53 ubiquitination and proteasomal degradation. Phosphorylates SRC; this increases SRC kinase activity. Phosphorylates ACTN1, ARHGEF7, GRB7, RET and WASL. Promotes phosphorylation of PXN and STAT1; most likely PXN and STAT1 are phosphorylated by a SRC family kinase that is recruited to autophosphorylated PTK2/FAK1, rather than by PTK2/FAK1 itself. Promotes phosphorylation of BCAR1; GIT2 and SHC1; this requires both SRC and PTK2/FAK1. Promotes phosphorylation of BMX and PIK3R1. In terms of biological role, does not contain a kinase domain and inhibits PTK2/FAK1 phosphorylation and signaling. Its enhanced expression can attenuate the nuclear accumulation of LPXN and limit its ability to enhance serum response factor (SRF)-dependent gene transcription. The polypeptide is Focal adhesion kinase 1 (Rattus norvegicus (Rat)).